The primary structure comprises 187 residues: Ribosome-recycling factor (187 aa).

It belongs to the RRF family.

The protein localises to the cytoplasm. Its function is as follows. Responsible for the release of ribosomes from messenger RNA at the termination of protein biosynthesis. May increase the efficiency of translation by recycling ribosomes from one round of translation to another. The chain is Ribosome-recycling factor from Orientia tsutsugamushi (strain Ikeda) (Rickettsia tsutsugamushi).